A 436-amino-acid chain; its full sequence is UDP-N-acetylmuramoylalanine--D-glutamate ligase (436 aa).

Residue 112 to 118 participates in ATP binding; that stretch reads GSNGKST.

It belongs to the MurCDEF family.

The protein resides in the cytoplasm. It catalyses the reaction UDP-N-acetyl-alpha-D-muramoyl-L-alanine + D-glutamate + ATP = UDP-N-acetyl-alpha-D-muramoyl-L-alanyl-D-glutamate + ADP + phosphate + H(+). Its pathway is cell wall biogenesis; peptidoglycan biosynthesis. Functionally, cell wall formation. Catalyzes the addition of glutamate to the nucleotide precursor UDP-N-acetylmuramoyl-L-alanine (UMA). This Photorhabdus laumondii subsp. laumondii (strain DSM 15139 / CIP 105565 / TT01) (Photorhabdus luminescens subsp. laumondii) protein is UDP-N-acetylmuramoylalanine--D-glutamate ligase.